A 93-amino-acid polypeptide reads, in one-letter code: Large ribosomal subunit protein bL27 (93 aa).

The propeptide occupies 1–10; the sequence is MRFLLGLQYF. Positions 14 to 36 are disordered; that stretch reads KGVGSTKNGRDSESKRLGAKKSD. The segment covering 21–36 has biased composition (basic and acidic residues); sequence NGRDSESKRLGAKKSD.

It belongs to the bacterial ribosomal protein bL27 family. The N-terminus is cleaved by ribosomal processing cysteine protease Prp.

In Mycoplasma capricolum subsp. capricolum (strain California kid / ATCC 27343 / NCTC 10154), this protein is Large ribosomal subunit protein bL27.